The primary structure comprises 662 residues: Probable quinol oxidase subunit 1 (662 aa).

A run of 2 helical transmembrane segments spans residues 14–34 (WMIT…IAVI) and 58–78 (VMYL…ALLI). Position 102 (His-102) interacts with Fe(II)-heme a. The next 8 helical transmembrane spans lie at 103-123 (GVIM…NIVV), 140-160 (VSFW…IIGG), 187-207 (IAIQ…FVTI), 228-248 (FITT…LALM), 273-293 (FFWV…FGIY), 311-331 (MVWA…HHFF), 336-356 (GALI…PTGV), and 376-396 (MLFS…GVML). His-279, Tyr-283, His-328, and His-329 together coordinate Cu cation. Positions 279–283 (HPEVY) form a cross-link, 1'-histidyl-3'-tyrosine (His-Tyr). Residue His-414 participates in heme a3 binding. Transmembrane regions (helical) follow at residues 415-435 (FHYT…IFWY), 451-471 (CFWF…ILGL), 493-513 (ISTI…VSIV), 587-604 (PVGF…FFLI), and 608-627 (VIPA…YRSF). Residue His-416 participates in Fe(II)-heme a binding.

This sequence belongs to the heme-copper respiratory oxidase family. Requires Cu cation as cofactor. Ferriheme a serves as cofactor. Heme A3. is required as a cofactor.

The protein resides in the cell membrane. It carries out the reaction 2 a quinol + O2 = 2 a quinone + 2 H2O. The protein operates within energy metabolism; oxidative phosphorylation. Functionally, catalyzes quinol oxidation with the concomitant reduction of oxygen to water. The polypeptide is Probable quinol oxidase subunit 1 (qoxB) (Staphylococcus aureus (strain COL)).